Here is a 538-residue protein sequence, read N- to C-terminus: Probable inorganic phosphate transporter 1-4 (538 aa).

Residues 1–23 (MAGELKVLNALDSAKTQWYHFTA) are Cytoplasmic-facing. A helical transmembrane segment spans residues 24–44 (IVIAGMGFFTDAYDLFSISLV). The Extracellular segment spans residues 45–69 (TKLLGRIYYFNPASKSPGSLPPNVS). The helical transmembrane segment at 70 to 90 (AAVNGVAFCGTLAGQLFFGWL) threads the bilayer. Residues 91-98 (GDKMGRKK) are Cytoplasmic-facing. A helical membrane pass occupies residues 99–119 (VYGMTLMLMVICCLASGLSFG). Over 120–123 (SSAK) the chain is Extracellular. The helical transmembrane segment at 124–144 (GVMATLCFFRFWLGFGIGGDY) threads the bilayer. Residues 145–163 (PLSATIMSEYANKRTRGAF) lie on the Cytoplasmic side of the membrane. A helical transmembrane segment spans residues 164–184 (IAAVFAMQGFGNLTGGIVAII). Residues 185-210 (VSAAFKSRFDAPAYRDDRTGSTVPQA) are Extracellular-facing. The chain crosses the membrane as a helical span at residues 211–231 (DYAWRIVLMFGAIPALLTYYW). Topologically, residues 232–294 (RMKMPETARY…RQFLRRHGRH (63 aa)) are cytoplasmic. Residues 295–315 (LLGTTVCWFVLDIAFYSSNLF) form a helical membrane-spanning segment. Residues 316 to 346 (QKDIYTAVQWLPKADTMSALEEMFKISRAQT) are Extracellular-facing. The helical transmembrane segment at 347 to 367 (LVALCGTIPGYWFTVFFIDII) threads the bilayer. The Cytoplasmic segment spans residues 368–369 (GR). A helical membrane pass occupies residues 370–390 (FVIQLGGFFFMTAFMLGLAVP). Over 391–396 (YHHWTT) the chain is Extracellular. Residues 397-417 (PGNHIGFVVMYAFTFFFANFG) traverse the membrane as a helical segment. The Cytoplasmic portion of the chain corresponds to 418–440 (PNSTTFIVPAEIFPARLRSTCHG). Residues 441–461 (ISAAAGKAGAIVGSFGFLYAA) traverse the membrane as a helical segment. Residues 462 to 481 (QSTDASKTDAGYPPGIGVRN) are Extracellular-facing. Residues 482–502 (SLFFLAGCNVIGFFFTFLVPE) form a helical membrane-spanning segment. The Cytoplasmic portion of the chain corresponds to 503-538 (SKGKSLEELSGENEDDDDVPEAPATADHRTAPAPPA). The interval 507 to 538 (SLEELSGENEDDDDVPEAPATADHRTAPAPPA) is disordered. Acidic residues predominate over residues 511 to 522 (LSGENEDDDDVP).

The protein belongs to the major facilitator superfamily. Phosphate:H(+) symporter (TC 2.A.1.9) family. In terms of tissue distribution, expressed at low levels in roots.

It localises to the membrane. High-affinity transporter for external inorganic phosphate. This Oryza sativa subsp. japonica (Rice) protein is Probable inorganic phosphate transporter 1-4 (PHT1-4).